We begin with the raw amino-acid sequence, 102 residues long: Iron-sulfur cluster assembly protein CyaY (102 aa).

It belongs to the frataxin family.

In terms of biological role, involved in iron-sulfur (Fe-S) cluster assembly. May act as a regulator of Fe-S biogenesis. In Histophilus somni (strain 2336) (Haemophilus somnus), this protein is Iron-sulfur cluster assembly protein CyaY.